Reading from the N-terminus, the 304-residue chain is Peroxisomal membrane protein 13 (304 aa).

Disordered stretches follow at residues 1–78 and 258–304; these read MASQ…WEQQ and PRKM…VWGN. 2 stretches are compositionally biased toward polar residues: residues 19-44 and 56-67; these read NTSG…SGTA and RPNTAANMNSLS. A compositionally biased stretch (low complexity) spans 262–279; sequence QQPPQGPNGLPLPHQPHG.

It belongs to the peroxin-13 family. Interacts with PEX14; forming the PEX13-PEX14 docking complex. Interacts (via N-terminus) with PEX7, but not with PEX5. Interacts with APEM9 (via N-terminus). In terms of tissue distribution, highly expressed in pollen. Detected in shoots, roots, stems, leaves, inflorescences and emasculated postils. Strongly expressed in both male and female gametophytes during fertilization.

It is found in the peroxisome membrane. Its function is as follows. Component of the PEX13-PEX14 docking complex, a translocon channel that specifically mediates the import of peroxisomal cargo proteins bound to PEX5 receptor. The PEX13-PEX14 docking complex forms a large import pore which can be opened to a diameter of about 9 nm. Mechanistically, PEX5 receptor along with cargo proteins associates with the PEX14 subunit of the PEX13-PEX14 docking complex in the cytosol, leading to the insertion of the receptor into the organelle membrane with the concomitant translocation of the cargo into the peroxisome matrix. Essential for pollen-tube discharge that take place only in the presence of functional peroxisomes in either the male or the female gametophyte. This is Peroxisomal membrane protein 13 from Arabidopsis thaliana (Mouse-ear cress).